Reading from the N-terminus, the 153-residue chain is Large ribosomal subunit protein uL23m (153 aa).

A disordered region spans residues Met131–Leu153.

It belongs to the universal ribosomal protein uL23 family. As to quaternary structure, component of the mitochondrial ribosome large subunit (39S) which comprises a 16S rRNA and about 50 distinct proteins.

The protein resides in the mitochondrion. The protein is Large ribosomal subunit protein uL23m (MRPL23) of Otolemur garnettii (Small-eared galago).